We begin with the raw amino-acid sequence, 356 residues long: tRNA-specific 2-thiouridylase MnmA (356 aa).

ATP-binding positions include 6–13 (AMSGGVDS) and Leu-32. Cys-101 (nucleophile) is an active-site residue. Cys-101 and Cys-193 form a disulfide bridge. Gly-125 is an ATP binding site. The interaction with tRNA stretch occupies residues 143 to 145 (KDQ). Residue Cys-193 is the Cysteine persulfide intermediate of the active site.

Belongs to the MnmA/TRMU family.

It localises to the cytoplasm. The enzyme catalyses S-sulfanyl-L-cysteinyl-[protein] + uridine(34) in tRNA + AH2 + ATP = 2-thiouridine(34) in tRNA + L-cysteinyl-[protein] + A + AMP + diphosphate + H(+). Its function is as follows. Catalyzes the 2-thiolation of uridine at the wobble position (U34) of tRNA, leading to the formation of s(2)U34. This Mycolicibacterium smegmatis (strain ATCC 700084 / mc(2)155) (Mycobacterium smegmatis) protein is tRNA-specific 2-thiouridylase MnmA.